Consider the following 199-residue polypeptide: 7-methyl-GTP pyrophosphatase (199 aa).

Catalysis depends on aspartate 76, which acts as the Proton acceptor.

Belongs to the Maf family. YceF subfamily. A divalent metal cation serves as cofactor.

Its subcellular location is the cytoplasm. It catalyses the reaction N(7)-methyl-GTP + H2O = N(7)-methyl-GMP + diphosphate + H(+). Nucleoside triphosphate pyrophosphatase that hydrolyzes 7-methyl-GTP (m(7)GTP). May have a dual role in cell division arrest and in preventing the incorporation of modified nucleotides into cellular nucleic acids. The polypeptide is 7-methyl-GTP pyrophosphatase (Rhizobium meliloti (strain 1021) (Ensifer meliloti)).